The following is a 188-amino-acid chain: Pyridoxal 5'-phosphate synthase subunit PdxT (188 aa).

47–49 (GES) contacts L-glutamine. C79 (nucleophile) is an active-site residue. L-glutamine is bound by residues R105 and 134–135 (IR). Residues H170 and E172 each act as charge relay system in the active site.

This sequence belongs to the glutaminase PdxT/SNO family. As to quaternary structure, in the presence of PdxS, forms a dodecamer of heterodimers. Only shows activity in the heterodimer.

It carries out the reaction aldehydo-D-ribose 5-phosphate + D-glyceraldehyde 3-phosphate + L-glutamine = pyridoxal 5'-phosphate + L-glutamate + phosphate + 3 H2O + H(+). The catalysed reaction is L-glutamine + H2O = L-glutamate + NH4(+). It participates in cofactor biosynthesis; pyridoxal 5'-phosphate biosynthesis. Catalyzes the hydrolysis of glutamine to glutamate and ammonia as part of the biosynthesis of pyridoxal 5'-phosphate. The resulting ammonia molecule is channeled to the active site of PdxS. The chain is Pyridoxal 5'-phosphate synthase subunit PdxT from Listeria monocytogenes serovar 1/2a (strain ATCC BAA-679 / EGD-e).